A 475-amino-acid chain; its full sequence is Chromosomal replication initiator protein DnaA (475 aa).

The domain I, interacts with DnaA modulators stretch occupies residues 1–73; it reads MSDIEQERWS…LACWQAELPD (73 aa). Residues 73 to 131 form a domain II region; that stretch reads DVHRIDLMVRSAMRCAAPAKEAPAADPRRPEHGDGRASTELKMVATAPASANHDALGGS. Residues 132–354 are domain III, AAA+ region; it reads PLDPRLTFAS…GAINRLLAHS (223 aa). ATP is bound by residues glycine 179, glycine 181, lysine 182, and threonine 183. The segment at 355 to 475 is domain IV, binds dsDNA; it reads KLNAQPVTLE…VELLKRQLQE (121 aa).

This sequence belongs to the DnaA family. As to quaternary structure, oligomerizes as a right-handed, spiral filament on DNA at oriC.

The protein resides in the cytoplasm. Functionally, plays an essential role in the initiation and regulation of chromosomal replication. ATP-DnaA binds to the origin of replication (oriC) to initiate formation of the DNA replication initiation complex once per cell cycle. Binds the DnaA box (a 9 base pair repeat at the origin) and separates the double-stranded (ds)DNA. Forms a right-handed helical filament on oriC DNA; dsDNA binds to the exterior of the filament while single-stranded (ss)DNA is stabiized in the filament's interior. The ATP-DnaA-oriC complex binds and stabilizes one strand of the AT-rich DNA unwinding element (DUE), permitting loading of DNA polymerase. After initiation quickly degrades to an ADP-DnaA complex that is not apt for DNA replication. Binds acidic phospholipids. The sequence is that of Chromosomal replication initiator protein DnaA from Nitrobacter hamburgensis (strain DSM 10229 / NCIMB 13809 / X14).